A 347-amino-acid chain; its full sequence is Eukaryotic translation initiation factor 3 subunit I (347 aa).

WD repeat units follow at residues G8–T47, D50–S89, E150–K190, I192–K233, and G289–K328.

Belongs to the eIF-3 subunit I family. In terms of assembly, component of the eukaryotic translation initiation factor 3 (eIF-3) complex.

The protein localises to the cytoplasm. Functionally, component of the eukaryotic translation initiation factor 3 (eIF-3) complex, which is involved in protein synthesis of a specialized repertoire of mRNAs and, together with other initiation factors, stimulates binding of mRNA and methionyl-tRNAi to the 40S ribosome. The eIF-3 complex specifically targets and initiates translation of a subset of mRNAs involved in cell proliferation. The protein is Eukaryotic translation initiation factor 3 subunit I of Kluyveromyces lactis (strain ATCC 8585 / CBS 2359 / DSM 70799 / NBRC 1267 / NRRL Y-1140 / WM37) (Yeast).